Consider the following 1027-residue polypeptide: Kinesin heavy chain isoform 5A (1027 aa).

Position 2 is an N-acetylalanine (Ala2). Residues 9–327 (SIKVLCRFRP…LMFGQRAKTI (319 aa)) enclose the Kinesin motor domain. 86-93 (GQTSSGKT) is an ATP binding site. The interval 174 to 315 (VSSPEEILDV…PSSYNDAETK (142 aa)) is microtubule-binding. The necessary for interaction with ZFYVE27 stretch occupies residues 271–361 (EGTKSYVPYR…KTKAQKETIA (91 aa)). Positions 331 to 906 (ASVNLELTAE…VDRIKEAVRY (576 aa)) form a coiled coil. The segment at 353-1027 (TKAQKETIAK…FPLHQETAAS (675 aa)) is interaction with BICD2. At Thr397 the chain carries Phosphothreonine. Residues 906–937 (YKSSGKRGHSAQIAKPVRPGHYPASSPTNPYG) are disordered. A globular region spans residues 907 to 1027 (KSSGKRGHSA…FPLHQETAAS (121 aa)).

The protein belongs to the TRAFAC class myosin-kinesin ATPase superfamily. Kinesin family. Kinesin subfamily. As to quaternary structure, oligomer composed of two heavy chains and two light chains. Interacts with GRIP1. Interacts with FMR1 (via C-terminus); this interaction is increased in a mGluR-dependent manner. Interacts with BORCS5. Interacts with ZFYVE27. Interacts with VAPA, VAPB, SURF4, RAB11A (GDP-bound form), RAB11B (GDP-bound form) and RTN3 in a ZFYVE27-dependent manner. Interacts with BICD2. Interacts with DTNB.

The protein localises to the cytoplasm. Its subcellular location is the perinuclear region. It is found in the cytoskeleton. The protein resides in the perikaryon. The catalysed reaction is ATP + H2O + a kinesin associated with a microtubule at position (n) = ADP + phosphate a kinesin associated with a microtubule at position (n+1, toward the plus end).. Its function is as follows. Microtubule-dependent motor required for slow axonal transport of neurofilament proteins (NFH, NFM and NFL). Can induce formation of neurite-like membrane protrusions in non-neuronal cells in a ZFYVE27-dependent manner. The ZFYVE27-KIF5A complex contributes to the vesicular transport of VAPA, VAPB, SURF4, RAB11A, RAB11B and RTN3 proteins in neurons. Required for anterograde axonal transportation of MAPK8IP3/JIP3 which is essential for MAPK8IP3/JIP3 function in axon elongation. This is Kinesin heavy chain isoform 5A (Kif5a) from Mus musculus (Mouse).